Consider the following 116-residue polypeptide: SPbeta prophage-derived uncharacterized protein YomQ (116 aa).

This Bacillus subtilis (strain 168) protein is SPbeta prophage-derived uncharacterized protein YomQ (yomQ).